We begin with the raw amino-acid sequence, 347 residues long: NADH-quinone oxidoreductase subunit H (347 aa).

8 helical membrane passes run 13 to 33, 82 to 102, 115 to 135, 161 to 181, 198 to 218, 248 to 268, 286 to 306, and 325 to 345; these read LIIA…VAYL, GVFL…WAVI, VGIL…IMGG, IGFV…TDIV, FLDW…ISAL, FLLF…LMTV, VPGI…FAMV, and VFLP…KVFG.

The protein belongs to the complex I subunit 1 family. As to quaternary structure, NDH-1 is composed of 14 different subunits. Subunits NuoA, H, J, K, L, M, N constitute the membrane sector of the complex.

It is found in the cell inner membrane. The enzyme catalyses a quinone + NADH + 5 H(+)(in) = a quinol + NAD(+) + 4 H(+)(out). Its function is as follows. NDH-1 shuttles electrons from NADH, via FMN and iron-sulfur (Fe-S) centers, to quinones in the respiratory chain. The immediate electron acceptor for the enzyme in this species is believed to be ubiquinone. Couples the redox reaction to proton translocation (for every two electrons transferred, four hydrogen ions are translocated across the cytoplasmic membrane), and thus conserves the redox energy in a proton gradient. This subunit may bind ubiquinone. In Brucella melitensis biotype 1 (strain ATCC 23456 / CCUG 17765 / NCTC 10094 / 16M), this protein is NADH-quinone oxidoreductase subunit H.